Reading from the N-terminus, the 682-residue chain is Polycomb protein suz12-B (682 aa).

Positions 326 to 355 (DPSDPSTAPVAKPLSTRNSDTSTTESRIST) are disordered. A compositionally biased stretch (polar residues) spans 340–354 (STRNSDTSTTESRIS). Residues 408–431 (LHCPWCTLNCRKLYSLLKHLKLSH) form a C2H2-type zinc finger. The interval 523 to 599 (RLYFHSDSCM…NQMSQASMLF (77 aa)) is VEFS-box.

It belongs to the VEFS (VRN2-EMF2-FIS2-SU(Z)12) family. In terms of assembly, component of the prc2/eed-ezh2 complex.

It is found in the nucleus. Polycomb group (PcG) protein. Component of the prc2/eed-ezh2 complex, which methylates 'Lys-9' and 'Lys-27' of histone H3, leading to transcriptional repression of the affected target gene. This is Polycomb protein suz12-B (suz12b) from Danio rerio (Zebrafish).